The chain runs to 575 residues: Phosphoenolpyruvate-protein phosphotransferase (575 aa).

His-189 serves as the catalytic Tele-phosphohistidine intermediate. Residues Arg-296 and Arg-332 each coordinate phosphoenolpyruvate. Mg(2+)-binding residues include Glu-431 and Asp-455. Phosphoenolpyruvate-binding positions include 454-455 and Arg-465; that span reads ND. Cys-502 (proton donor) is an active-site residue.

The protein belongs to the PEP-utilizing enzyme family. Homodimer. Requires Mg(2+) as cofactor.

It is found in the cytoplasm. The enzyme catalyses L-histidyl-[protein] + phosphoenolpyruvate = N(pros)-phospho-L-histidyl-[protein] + pyruvate. Functionally, general (non sugar-specific) component of the phosphoenolpyruvate-dependent sugar phosphotransferase system (sugar PTS). This major carbohydrate active-transport system catalyzes the phosphorylation of incoming sugar substrates concomitantly with their translocation across the cell membrane. Enzyme I transfers the phosphoryl group from phosphoenolpyruvate (PEP) to the phosphoryl carrier protein (HPr). In Salmonella typhimurium (strain LT2 / SGSC1412 / ATCC 700720), this protein is Phosphoenolpyruvate-protein phosphotransferase (ptsI).